Reading from the N-terminus, the 163-residue chain is uncharacterized protein (163 aa).

It belongs to the IMPDH/GMPR family.

This is an uncharacterized protein from Haemophilus influenzae (strain ATCC 51907 / DSM 11121 / KW20 / Rd).